Reading from the N-terminus, the 157-residue chain is Endoribonuclease YbeY (157 aa).

3 residues coordinate Zn(2+): histidine 114, histidine 118, and histidine 124.

This sequence belongs to the endoribonuclease YbeY family. Zn(2+) is required as a cofactor.

Its subcellular location is the cytoplasm. In terms of biological role, single strand-specific metallo-endoribonuclease involved in late-stage 70S ribosome quality control and in maturation of the 3' terminus of the 16S rRNA. In Salmonella dublin (strain CT_02021853), this protein is Endoribonuclease YbeY.